Consider the following 918-residue polypeptide: MKNKILNTVLISILLLVVVFFVSTNFIINVQWFKEVGYLNVFFTKLIAICKLFVPIFILYFCVIAIYLFTLRKSIRSLVGDTKFKSVKKYFLLSNLVISILGAGATATTQWYKILQFTNAVPFGEVDPIFNKDISFYVFKLPLVQSLFSTAISLIIILVLITVIIYLALGFKDKIYQNKDNVININSKTYGIRKFAGKQLAVLASVLSLLIGCSYLLKSYNLVYSTRGVSYGAGYTDVKITMIFYKVIAVACVISSIVVFISILKLKFRPIIISIASIAVLIVLEPVVAIFTQQFVVKPNEMELEKPYISYSIDATKKAFNIDEIEVKEMEPNENITSEKLEDNKDIIENLKVNSTGPLLSFYQQVQLIKNYYEFNDADTDRYNINGKYTQVFVSPREINRDSMTTWQNKHLRYTHGYGLAMSRVNSVTEFGQPDFVMKDIPTVNTTDINLENPRIYFGESDNDYVIVNTEGGEFDYPTGDTENTFNYNGTGGLKMTPFNRVLFSIYERNPKILMSSSITSESRIILNRNIVKRVQEIAPFLTYDSDPYIVVHDGRLVWMMDAYTSTDKYPFSEPHEGVNYIRNSVKVVVDAFNGNVDFYVTDENDPIINCYLKIYKGLFKPLSEMPEDLKEHFRYPQDLFELQSKVLTKYHVDDPIKLFTEEDLWDRSLEVVKHGGENLSQGDEGKEESILNKAKENKNNEAENEGLYLMTKLPDEENVEMMLLDYFNMRGKQSMVALLGARMDGDNYGELVMYKFPPQRTIYSPILFKNRIQQDPNISKEISLWAGKGSEVIYGDIIIVPIEDSLLYLNTIYLKANSENSMPEMKRVILSNGDKIVIEENIEKALLKLFNYSSSEENKNSNKDETPKNEITSDNSGIKEAADLFNKAIEAQKNGDWATYGEFINKLGDILNKMSQE.

7 helical membrane passes run threonine 8–isoleucine 28, leucine 46–isoleucine 66, phenylalanine 91–tryptophan 111, alanine 151–phenylalanine 171, leucine 200–tyrosine 220, isoleucine 243–isoleucine 263, and isoleucine 271–phenylalanine 291. Positions glutamate 857 to lysine 869 are enriched in basic and acidic residues. Positions glutamate 857–asparagine 876 are disordered.

The protein belongs to the UPF0182 family.

Its subcellular location is the cell membrane. In Clostridium perfringens (strain ATCC 13124 / DSM 756 / JCM 1290 / NCIMB 6125 / NCTC 8237 / Type A), this protein is UPF0182 protein CPF_0011.